We begin with the raw amino-acid sequence, 430 residues long: MNFVEELRWRGMIHDIMPGTEEHLNKGMTSAYVGIDPTADSLHIGHLVGVMMLRHFQRAGHRPIALIGGATGMIGDPSMKSAERVLLDEATLRHNQDCIKQQLAKFLDFDSDAPNAAKLVNNYDWMKDYSFLGFIRDIGKHITVNYMMAKDSVKKRLSAESSTGLSFTEFSYQLLQGYDYLYLYRNEGCRLQMGGSDQWGNITTGTELIRRKDGGEAFALTCPLITKADGGKFGKTESGNIWLDPARTSPYAFYQFWLNVSDADAEKYIKIFTGLNQDEIAELATRQAEAPHLRPLQKRLAEEITVMVHSREAYDAAVEASEILFGKSTTEQLRKLDEATLLDVFAGVPQYHVERSRIATGISLVDLLADATDIFPSKGELRKTVKAGGVSLNKEKVADAEQTVGEDDLLSDRYLLAQKGKKSYYLIIVE.

Position 32 (Tyr32) interacts with L-tyrosine. The 'HIGH' region motif lies at Pro37–His46. Residues Tyr172 and Gln176 each contribute to the L-tyrosine site. Positions Lys232–Thr236 match the 'KMSKS' region motif. Position 235 (Lys235) interacts with ATP. Positions Ile362–Glu430 constitute an S4 RNA-binding domain.

The protein belongs to the class-I aminoacyl-tRNA synthetase family. TyrS type 1 subfamily. In terms of assembly, homodimer.

The protein resides in the cytoplasm. It carries out the reaction tRNA(Tyr) + L-tyrosine + ATP = L-tyrosyl-tRNA(Tyr) + AMP + diphosphate + H(+). Catalyzes the attachment of tyrosine to tRNA(Tyr) in a two-step reaction: tyrosine is first activated by ATP to form Tyr-AMP and then transferred to the acceptor end of tRNA(Tyr). This is Tyrosine--tRNA ligase from Porphyromonas gingivalis (strain ATCC 33277 / DSM 20709 / CIP 103683 / JCM 12257 / NCTC 11834 / 2561).